The sequence spans 44 residues: SEGTSCYIYHGVYGICKAKCAEDMKAMAGMGVCEGDLCCYKTPW.

Cystine bridges form between C6–C38, C16–C33, and C20–C39. The interval 7-10 (YIYH) is inhibitory motif.

The protein belongs to the sea anemone alpha-amylase inhibitor family.

It is found in the secreted. Functionally, mammalian alpha-amylase (AMY2A) inhibitor. The recombinant peptide inhibits porcine pancreatic (Ki=0.17 nM) and human saliva alpha-amylases (Ki=7.7 nM). It does not show antimicrobial (tested on fungi and bacteria) or channel modulating activities (tested on 18 voltage-gated sodium and potassium channles). This chain is Alpha-amylase inhibitor magnificamide, found in Heteractis magnifica (Magnificent sea anemone).